A 143-amino-acid chain; its full sequence is Endoribonuclease YbeY (143 aa).

Zn(2+) is bound by residues histidine 109, histidine 113, and aspartate 119.

The protein belongs to the endoribonuclease YbeY family. The cofactor is Zn(2+).

The protein resides in the cytoplasm. In terms of biological role, single strand-specific metallo-endoribonuclease involved in late-stage 70S ribosome quality control and in maturation of the 3' terminus of the 16S rRNA. This is Endoribonuclease YbeY from Christiangramia forsetii (strain DSM 17595 / CGMCC 1.15422 / KT0803) (Gramella forsetii).